A 200-amino-acid chain; its full sequence is GTP cyclohydrolase-2 (200 aa).

A GTP-binding site is contributed by 50-54; that stretch reads RIHSE. The Zn(2+) site is built by C55, C66, and C68. GTP is bound by residues Q71, 93–95, and T115; that span reads EGR. D127 (proton acceptor) is an active-site residue. The Nucleophile role is filled by R129. Residues T150 and K155 each coordinate GTP.

Belongs to the GTP cyclohydrolase II family. It depends on Zn(2+) as a cofactor.

It carries out the reaction GTP + 4 H2O = 2,5-diamino-6-hydroxy-4-(5-phosphoribosylamino)-pyrimidine + formate + 2 phosphate + 3 H(+). The protein operates within cofactor biosynthesis; riboflavin biosynthesis; 5-amino-6-(D-ribitylamino)uracil from GTP: step 1/4. Its function is as follows. Catalyzes the conversion of GTP to 2,5-diamino-6-ribosylamino-4(3H)-pyrimidinone 5'-phosphate (DARP), formate and pyrophosphate. The chain is GTP cyclohydrolase-2 from Acinetobacter baylyi (strain ATCC 33305 / BD413 / ADP1).